A 186-amino-acid chain; its full sequence is Translation initiation factor IF-3 (186 aa).

Belongs to the IF-3 family. As to quaternary structure, monomer.

The protein localises to the cytoplasm. Functionally, IF-3 binds to the 30S ribosomal subunit and shifts the equilibrium between 70S ribosomes and their 50S and 30S subunits in favor of the free subunits, thus enhancing the availability of 30S subunits on which protein synthesis initiation begins. The chain is Translation initiation factor IF-3 from Borreliella afzelii (strain PKo) (Borrelia afzelii).